Consider the following 271-residue polypeptide: Putative pyruvate, phosphate dikinase regulatory protein (271 aa).

150–157 (GVSRTSKT) contacts ADP.

Belongs to the pyruvate, phosphate/water dikinase regulatory protein family. PDRP subfamily.

The enzyme catalyses N(tele)-phospho-L-histidyl/L-threonyl-[pyruvate, phosphate dikinase] + ADP = N(tele)-phospho-L-histidyl/O-phospho-L-threonyl-[pyruvate, phosphate dikinase] + AMP + H(+). The catalysed reaction is N(tele)-phospho-L-histidyl/O-phospho-L-threonyl-[pyruvate, phosphate dikinase] + phosphate + H(+) = N(tele)-phospho-L-histidyl/L-threonyl-[pyruvate, phosphate dikinase] + diphosphate. Bifunctional serine/threonine kinase and phosphorylase involved in the regulation of the pyruvate, phosphate dikinase (PPDK) by catalyzing its phosphorylation/dephosphorylation. This is Putative pyruvate, phosphate dikinase regulatory protein from Oceanobacillus iheyensis (strain DSM 14371 / CIP 107618 / JCM 11309 / KCTC 3954 / HTE831).